Here is a 2936-residue protein sequence, read N- to C-terminus: Neurobeachin (2936 aa).

Residues 961–985 (ENIKKGKKGNVSTISGLSSQTAGAK) are disordered. A compositionally biased stretch (polar residues) spans 970-982 (NVSTISGLSSQTA). 2 positions are modified to phosphoserine: Ser-1001 and Ser-1004. 2 stretches are compositionally biased toward polar residues: residues 1203–1220 (TSDG…SSTK) and 1231–1241 (TLETESSNSKA). Disordered stretches follow at residues 1203–1222 (TSDG…TKGL), 1231–1265 (TLET…ESGK), and 1270–1289 (IQTT…QQDR). The segment covering 1253–1265 (DTERSDDGKESGK) has biased composition (basic and acidic residues). Residues 1270-1286 (IQTTATTQAVQGRSSTQ) show a composition bias toward polar residues. The stretch at 1316 to 1358 (TTMFRIPEFKWSPMHQRLLTDLLFALETDVHVWRSHSTKSVMD) is one WD 1 repeat. Disordered stretches follow at residues 1480 to 1521 (QRDR…LSPI), 1639 to 1667 (PDTV…DSGM), 1701 to 1721 (VKKS…PAPS), and 1830 to 1850 (TGAV…VNGA). Ser-1519 is subject to Phosphoserine. Residues 1701 to 1714 (VKKSQESLTEHPSE) show a composition bias toward basic and acidic residues. Phosphoserine is present on residues Ser-1704 and Ser-1707. Low complexity predominate over residues 1835 to 1845 (SGSSSSSSSSS). Position 2128 is a phosphoserine (Ser-2128). In terms of domain architecture, BEACH-type PH spans 2137 to 2245 (NLAGPVVLST…TVKKVVYSLP (109 aa)). The BEACH domain occupies 2264 to 2553 (ATPRQLYKSS…QLLIEPHPPR (290 aa)). Phosphoserine is present on Ser-2565. WD repeat units follow at residues 2708–2751 (GHWD…HIIG), 2768–2808 (GHDH…RALE), 2850–2889 (EIND…QLYI), and 2892–2931 (GCDA…WHYE).

It belongs to the WD repeat neurobeachin family. Interacts with RII subunit of PKA. As to expression, forebrain, brainstem and cerebellum.

The protein localises to the membrane. The protein resides in the endomembrane system. It localises to the postsynaptic cell membrane. In terms of biological role, binds to type II regulatory subunits of protein kinase A and anchors/targets them to the membrane. May anchor the kinase to cytoskeletal and/or organelle-associated proteins. May have a role in membrane trafficking. The sequence is that of Neurobeachin (Nbea) from Mus musculus (Mouse).